The primary structure comprises 250 residues: Small ribosomal subunit protein uS3 (250 aa).

In terms of domain architecture, KH type-2 spans 39–107; sequence VREFLTKKLK…PAQVSINEID (69 aa). Positions 214–250 are disordered; that stretch reads VMNPAPQEERPAKRGRGRGEGQERRGRRSDRAADKGE. Positions 220–250 are enriched in basic and acidic residues; the sequence is QEERPAKRGRGRGEGQERRGRRSDRAADKGE.

This sequence belongs to the universal ribosomal protein uS3 family. Part of the 30S ribosomal subunit. Forms a tight complex with proteins S10 and S14.

In terms of biological role, binds the lower part of the 30S subunit head. Binds mRNA in the 70S ribosome, positioning it for translation. The chain is Small ribosomal subunit protein uS3 from Acinetobacter baylyi (strain ATCC 33305 / BD413 / ADP1).